Here is a 354-residue protein sequence, read N- to C-terminus: Peptide chain release factor 1 (354 aa).

Gln-230 is modified (N5-methylglutamine).

This sequence belongs to the prokaryotic/mitochondrial release factor family. In terms of processing, methylated by PrmC. Methylation increases the termination efficiency of RF1.

It is found in the cytoplasm. Its function is as follows. Peptide chain release factor 1 directs the termination of translation in response to the peptide chain termination codons UAG and UAA. This Leptospira interrogans serogroup Icterohaemorrhagiae serovar copenhageni (strain Fiocruz L1-130) protein is Peptide chain release factor 1.